The chain runs to 110 residues: Disintegrin jerdostatin (110 aa).

The signal sequence occupies residues 1-20 (MIQVLLVTICLAVFPYQVSS). Positions 21–67 (KTLKSGSVNEYEVVNPGTVTGLPKGAVKQPEKKHEPMKGNTLQKLPL) are excised as a propeptide. The 84-residue stretch at 27–110 (SVNEYEVVNP…CECPSYPGNG (84 aa)) folds into the Disintegrin domain. 4 disulfides stabilise this stretch: cysteine 68–cysteine 77, cysteine 73–cysteine 96, cysteine 74–cysteine 101, and cysteine 86–cysteine 103. The Cell attachment site; atypical (RTS) motif lies at 88–90 (RTS).

The protein belongs to the disintegrin family. Short disintegrin subfamily. As to quaternary structure, monomer. Two conformers are found, they may differ by their disulfide bond connectivities. Conformer 2 is 33 times less active than conformer 1. Conformer 2 may represent a non-native protein. Post-translationally, the C-terminal dipeptide may be post-translationally removed, as seen in disintegrins that possess a KTS integrin-binding motif. As to expression, expressed by the venom gland.

The protein localises to the secreted. Recombinant protein inhibits the adhesion of alpha-1/beta-1-K562 (ITGA1/ITGB1) cells to collagen IV with an IC(50) of 80 nM. The polypeptide is Disintegrin jerdostatin (Protobothrops jerdonii (Jerdon's pitviper)).